The sequence spans 390 residues: Zinc transporter 7-B (390 aa).

Topologically, residues 1 to 37 (MLPLSIKDDEYKPPKFNLVRKVSGWIRSIFSDSTSRN) are cytoplasmic. A helical transmembrane segment spans residues 38 to 58 (LFCFLCLNLSFAFVELFYGIW). Topologically, residues 59-67 (SNSLGLISD) are lumenal. The helical transmembrane segment at 68 to 88 (SFHMFFDCTALLAGLAASVIS) threads the bilayer. Over 89–102 (RWKTNETFSYGYVR) the chain is Cytoplasmic. The chain crosses the membrane as a helical span at residues 103-123 (AEVLAGFVNGLFLIFTAFFIF). At 124–140 (SEGIERALDTPEVHHER) the chain is on the lumenal side. A helical transmembrane segment spans residues 141-161 (LLPVSIMGFLVNLIGIFVFQH). The tract at residues 161 to 226 (HGGGHGHSHE…GHDHSHKHGH (66 aa)) is his-rich loop. The Cytoplasmic portion of the chain corresponds to 162-250 (GGGHGHSHES…KGSSKQILEG (89 aa)). Residues 166 to 243 (GHSHESGHGH…DEPPEENKGS (78 aa)) form a disordered region. Residues 187-201 (GHSHSHGGGHGHSHG) show a composition bias toward basic residues. 2 stretches are compositionally biased toward basic and acidic residues: residues 202-218 (GGHE…EHGH) and 232-242 (CHDEPPEENKG). The chain crosses the membrane as a helical span at residues 251–271 (VFLHIVADALGSVGVIISTIL). Residues 272–276 (MQQYG) lie on the Lumenal side of the membrane. The helical transmembrane segment at 277 to 297 (LMIADPICSMLIALLIFVSVI) threads the bilayer. At 298–390 (PLLKQSIGIL…LYVQIDLAAM (93 aa)) the chain is on the cytoplasmic side.

The protein belongs to the cation diffusion facilitator (CDF) transporter (TC 2.A.4) family. SLC30A subfamily. Homooligomer.

The protein resides in the golgi apparatus membrane. Its subcellular location is the cytoplasmic vesicle. It is found in the golgi apparatus. It localises to the trans-Golgi network. The protein localises to the sarcoplasmic reticulum. The protein resides in the mitochondrion. The enzyme catalyses Zn(2+)(in) = Zn(2+)(out). Zinc ion transporter mediating zinc entry from the cytosol into the lumen of organelles along the secretory pathway. By contributing to zinc ion homeostasis within the early secretory pathway, regulates the activation and folding of enzymes like alkaline phosphatases. The sequence is that of Zinc transporter 7-B (slc30a7-b) from Xenopus laevis (African clawed frog).